Reading from the N-terminus, the 218-residue chain is Elongation factor Ts (218 aa).

Residues 82–85 are involved in Mg(2+) ion dislocation from EF-Tu; the sequence is TDFV.

Belongs to the EF-Ts family.

The protein resides in the cytoplasm. Associates with the EF-Tu.GDP complex and induces the exchange of GDP to GTP. It remains bound to the aminoacyl-tRNA.EF-Tu.GTP complex up to the GTP hydrolysis stage on the ribosome. The protein is Elongation factor Ts of Prochlorococcus marinus (strain MIT 9303).